We begin with the raw amino-acid sequence, 131 residues long: Insulin-like 3 (131 aa).

Positions 1 to 20 (MDPRLPAWALVLLGPALVFA) are cleaved as a signal peptide. 3 disulfides stabilise this stretch: C34–C116, C46–C129, and C115–C120. Positions 58–104 (PATGGDRELLQWLERRHLLHGLVADSNLTLGPGLQPLPQTSHHHRHH) are cleaved as a propeptide — c peptide like.

The protein belongs to the insulin family. In terms of assembly, heterodimer of a B chain and an A chain linked by two disulfide bonds. Expressed in prenatal and postnatal Leydig cells. Found as well in the corpus luteum, trophoblast, fetal membranes and breast.

It localises to the secreted. Seems to play a role in testicular function. May be a trophic hormone with a role in testicular descent in fetal life. Is a ligand for LGR8 receptor. The sequence is that of Insulin-like 3 (INSL3) from Homo sapiens (Human).